The chain runs to 64 residues: Large ribosomal subunit protein bL28c (64 aa).

Belongs to the bacterial ribosomal protein bL28 family.

The protein localises to the plastid. It localises to the chloroplast. This Gracilaria tenuistipitata var. liui (Red alga) protein is Large ribosomal subunit protein bL28c.